Consider the following 276-residue polypeptide: Diaminopimelate epimerase (276 aa).

Residues asparagine 13, glutamine 46, and asparagine 66 each contribute to the substrate site. The active-site Proton donor is cysteine 75. Substrate contacts are provided by residues 76–77 (GN), asparagine 159, asparagine 192, and 210–211 (ER). Residue cysteine 219 is the Proton acceptor of the active site. Residue 220–221 (GT) participates in substrate binding.

Belongs to the diaminopimelate epimerase family. As to quaternary structure, homodimer.

It localises to the cytoplasm. The enzyme catalyses (2S,6S)-2,6-diaminopimelate = meso-2,6-diaminopimelate. It participates in amino-acid biosynthesis; L-lysine biosynthesis via DAP pathway; DL-2,6-diaminopimelate from LL-2,6-diaminopimelate: step 1/1. Functionally, catalyzes the stereoinversion of LL-2,6-diaminopimelate (L,L-DAP) to meso-diaminopimelate (meso-DAP), a precursor of L-lysine and an essential component of the bacterial peptidoglycan. The sequence is that of Diaminopimelate epimerase from Aeromonas hydrophila subsp. hydrophila (strain ATCC 7966 / DSM 30187 / BCRC 13018 / CCUG 14551 / JCM 1027 / KCTC 2358 / NCIMB 9240 / NCTC 8049).